The primary structure comprises 556 residues: F-box protein YDR131C (556 aa).

The F-box domain occupies 1–44 (MFDKLPYEIFKQIAWRIPQEDKISLTYVCKRSYESIIPFIYQNL).

As to quaternary structure, interacts with SKP1. Component of the probable SCF(YDR131C) complex containing CDC53, SKP1, RBX1 and YDR131C.

The protein resides in the vacuole. The protein operates within protein modification; protein ubiquitination. Its function is as follows. Substrate recognition component of a SCF (SKP1-CUL1-F-box protein) E3 ubiquitin-protein ligase complex which mediates the ubiquitination and subsequent proteasomal degradation of target proteins. Probably recognizes and binds to phosphorylated target proteins. The sequence is that of F-box protein YDR131C from Saccharomyces cerevisiae (strain ATCC 204508 / S288c) (Baker's yeast).